The primary structure comprises 150 residues: Centrin-B (150 aa).

EF-hand domains follow at residues 12-46, 80-114, and 115-150; these read DQISEIKESFDMFKSDNGKLDNDQIKYAFKALGCE, DSMSTLEQAFKLFVKDGSGITFKDLKKVAINIGEE, and CSDSDLYDMIEFADTDGDGVINKSEFISLMTTKKVL. D128, D130, D132, and E139 together coordinate Ca(2+).

It belongs to the centrin family.

The protein localises to the cytoplasm. Its subcellular location is the cytoskeleton. The protein resides in the microtubule organizing center. It is found in the centrosome. Plays a fundamental role in microtubule-organizing center structure and function. This Dictyostelium discoideum (Social amoeba) protein is Centrin-B (cenB).